The sequence spans 462 residues: UDP-N-acetylmuramoylalanine--D-glutamate ligase (462 aa).

ATP is bound at residue Gly-117 to Thr-123.

This sequence belongs to the MurCDEF family.

Its subcellular location is the cytoplasm. It carries out the reaction UDP-N-acetyl-alpha-D-muramoyl-L-alanine + D-glutamate + ATP = UDP-N-acetyl-alpha-D-muramoyl-L-alanyl-D-glutamate + ADP + phosphate + H(+). It functions in the pathway cell wall biogenesis; peptidoglycan biosynthesis. Functionally, cell wall formation. Catalyzes the addition of glutamate to the nucleotide precursor UDP-N-acetylmuramoyl-L-alanine (UMA). In Parasynechococcus marenigrum (strain WH8102), this protein is UDP-N-acetylmuramoylalanine--D-glutamate ligase.